The chain runs to 229 residues: Acetylcholine-binding protein (229 aa).

An N-terminal signal peptide occupies residues 1-19 (MRRNIFCLACLWIVQACLS). Asparagine 85 carries N-linked (GlcNAc...) asparagine glycosylation. Residues 114-217 (PEVLTPQLAR…PEAYEDVEVS (104 aa)) form the Ig-like domain. Cysteine 142 and cysteine 155 are disulfide-bonded.

In terms of assembly, homopentamer. N-glycosylated. In terms of tissue distribution, expressed by glial cells.

It is found in the synaptic cleft. In terms of biological role, binds to acetylcholine. Modulates neuronal synaptic transmission. In Lymnaea stagnalis (Great pond snail), this protein is Acetylcholine-binding protein.